The following is a 129-amino-acid chain: Follitropin subunit beta (129 aa).

The signal sequence occupies residues 1-20; it reads MKSVQLCFLFCCWRAICCKS. 6 disulfides stabilise this stretch: Cys-21–Cys-69, Cys-35–Cys-84, Cys-38–Cys-122, Cys-46–Cys-100, Cys-50–Cys-102, and Cys-105–Cys-112. 2 N-linked (GlcNAc...) asparagine glycosylation sites follow: Asn-25 and Asn-42.

The protein belongs to the glycoprotein hormones subunit beta family. As to quaternary structure, heterodimer. The active follitropin is a heterodimer composed of an alpha chain/CGA shared with other hormones and a unique beta chain/FSHB shown here.

It is found in the secreted. In terms of biological role, together with the alpha chain CGA constitutes follitropin, the follicle-stimulating hormone, and provides its biological specificity to the hormone heterodimer. Binds FSHR, a G protein-coupled receptor, on target cells to activate downstream signaling pathways. Follitropin is involved in follicle development and spermatogenesis in reproductive organs. The chain is Follitropin subunit beta (FSHB) from Ailuropoda melanoleuca (Giant panda).